The sequence spans 286 residues: MQKLTLPAPAKLNLWLHIIGRRADGYHELETVFQFLDHGDELSFALRDDGVIRLHTEIEAVPHDSNLIVRAARMLQAQSGTTLGADIWLTKVLPMGGGIGGGSSDAATTLLALAHLWQLDWDEDRLAALGLSLGADVPVFVRGHAAFAQGVGEQLTPVDPIEPWYVVLVPQVSVSTVEIFSHPQLTRDSLPLKMRPVPEGNSRNDCQPVVEQNYPEVRNALNSLGKFTEARLTGTGSCVFGAFPSKAEADKVLALLSATQTGFVAKGSNVSMLHRKLQSLVKKSSA.

Lysine 11 is an active-site residue. ATP is bound at residue proline 94–serine 104. Aspartate 136 is a catalytic residue.

Belongs to the GHMP kinase family. IspE subfamily.

The catalysed reaction is 4-CDP-2-C-methyl-D-erythritol + ATP = 4-CDP-2-C-methyl-D-erythritol 2-phosphate + ADP + H(+). The protein operates within isoprenoid biosynthesis; isopentenyl diphosphate biosynthesis via DXP pathway; isopentenyl diphosphate from 1-deoxy-D-xylulose 5-phosphate: step 3/6. Its function is as follows. Catalyzes the phosphorylation of the position 2 hydroxy group of 4-diphosphocytidyl-2C-methyl-D-erythritol. This Pseudomonas putida (strain ATCC 47054 / DSM 6125 / CFBP 8728 / NCIMB 11950 / KT2440) protein is 4-diphosphocytidyl-2-C-methyl-D-erythritol kinase.